Consider the following 360-residue polypeptide: MPTPFAPLKNDTFLRALLRQPTDYTPMWMMRQAGRYLPEYRATRTRAGSFLGLAKNPDYATEVTLQPLDRYDLDAAILFSDILTVPDAMGLGLYFVDGEGPKFERPLRDEKAVQALKVPELDSLQYVFDAVTQIRTELKGRVPLIGFSGSPWTLACYMVEGGGSDDFRTVKAMLYNRPDLMHHILQTNAITVAAYLNAQIDAGAQAVMMFDTWGGALADGIYQQFSLHYMREVMKHVKTEKEGVRIPSIVFTKGGGLWLNEIADVGADAVGLDWTVNLGAARAQVGDRVALQGNLDPSILFAQPEQIRTEVEKVLMSFGKHAPGSGHVFNLGHGISQFTPPESVSVLVDAVHELSRSLHA.

Substrate contacts are provided by residues 31–35 (RQAGR), Asp-81, Tyr-157, Thr-212, and His-333.

Belongs to the uroporphyrinogen decarboxylase family. Homodimer.

Its subcellular location is the cytoplasm. The enzyme catalyses uroporphyrinogen III + 4 H(+) = coproporphyrinogen III + 4 CO2. It functions in the pathway porphyrin-containing compound metabolism; protoporphyrin-IX biosynthesis; coproporphyrinogen-III from 5-aminolevulinate: step 4/4. In terms of biological role, catalyzes the decarboxylation of four acetate groups of uroporphyrinogen-III to yield coproporphyrinogen-III. The polypeptide is Uroporphyrinogen decarboxylase (Herminiimonas arsenicoxydans).